The chain runs to 122 residues: Large ribosomal subunit protein uL14 (122 aa).

Belongs to the universal ribosomal protein uL14 family. In terms of assembly, part of the 50S ribosomal subunit. Forms a cluster with proteins L3 and L19. In the 70S ribosome, L14 and L19 interact and together make contacts with the 16S rRNA in bridges B5 and B8.

In terms of biological role, binds to 23S rRNA. Forms part of two intersubunit bridges in the 70S ribosome. This Corynebacterium aurimucosum (strain ATCC 700975 / DSM 44827 / CIP 107346 / CN-1) (Corynebacterium nigricans) protein is Large ribosomal subunit protein uL14.